A 561-amino-acid chain; its full sequence is Lipase maturation factor 1 (561 aa).

Residues 1-32 (MAAPRESLRRRKAGAGDPEPEAPPGQGRDLKG) form a disordered region. The Cytoplasmic segment spans residues 1 to 42 (MAAPRESLRRRKAGAGDPEPEAPPGQGRDLKGRPARLRAGTF). A helical membrane pass occupies residues 43 to 65 (WLTRIVLLRALAFVYFVAFLVAF). Topologically, residues 66 to 120 (HQNKQLIGDRGLLPCRAYLQSVQRHFGGRVSWDALSYAPTILWLLDWSHMDANLD) are lumenal. The helical transmembrane segment at 121-144 (ALALLGLGISSFILVSGCANMVLM) threads the bilayer. The Cytoplasmic segment spans residues 145–200 (AALWVLYMSLVNVGQIWYSFGWESQLLETGFLGIFLCPLWTLSALPRGTPTSWVVM). The chain crosses the membrane as a helical span at residues 201 to 214 (WGFRWLIFRIMLGA). The Lumenal portion of the chain corresponds to 215–285 (GLIKIRGDRC…LGRRMCIVHG (71 aa)). Residues 286 to 314 (ALQVLFQVVLIISGNLSFLNWLTIVPSLA) form a helical membrane-spanning segment. At 315-360 (CFDDATLGGLFPSGPGRLKDQVLKIQEEETRGARAPRTRGSVARGT) the chain is on the cytoplasmic side. Residues 361 to 382 (VNLALGILVAWLSIPVVLNLLS) traverse the membrane as a helical segment. At 383-561 (PRQVMNSSFN…SRQWPYPEPE (179 aa)) the chain is on the lumenal side.

The protein belongs to the lipase maturation factor family. In terms of assembly, interacts with LPL and SEL1L.

Its subcellular location is the endoplasmic reticulum membrane. Its function is as follows. Involved in the maturation of specific proteins in the endoplasmic reticulum. Required for maturation and transport of active lipoprotein lipase (LPL) through the secretory pathway. Each LMF1 molecule chaperones 50 or more molecules of LPL. In Bos taurus (Bovine), this protein is Lipase maturation factor 1 (LMF1).